The following is a 92-amino-acid chain: uncharacterized protein (92 aa).

Helical transmembrane passes span 1–21 (MNIY…LVGL), 30–50 (ANVL…IVVI), and 62–82 (IALA…KVIG).

The protein to M.thermoautotrophicum MTH1250.

Its subcellular location is the cell membrane. This is an uncharacterized protein from Methanocaldococcus jannaschii (strain ATCC 43067 / DSM 2661 / JAL-1 / JCM 10045 / NBRC 100440) (Methanococcus jannaschii).